Here is a 792-residue protein sequence, read N- to C-terminus: RAD50-interacting protein 1 (792 aa).

The tract at residues 1-22 is disordered; it reads MLPAGEIGASPAAPCCSESGDE. Residues 103–124 adopt a coiled-coil conformation; it reads IRSALKNAEESKQFLNQFLEQE. Residues 220 to 792 form the RINT1/TIP20 domain; it reads WHKILKDKLT…LRTNWPNTGK (573 aa).

The protein belongs to the RINT1 family. Component of the NRZ complex composed of NBAS, ZW10 and RINT1/TIP20L; NRZ associates with SNAREs STX18, USE1L, BNIP1/SEC20L and SEC22B (the assembly has been described as syntaxin 18 complex). Interacts directly with BNIP1/SEC20L and ZW10. Interacts with UVRAG. Interacts with RAD50 during late S and G2/M phases. Interacts with RBL2, preferentially with the active, hypophosphorylated form.

Its subcellular location is the cytoplasm. It localises to the endoplasmic reticulum membrane. Involved in regulation of membrane traffic between the Golgi and the endoplasmic reticulum (ER); the function is proposed to depend on its association in the NRZ complex which is believed to play a role in SNARE assembly at the ER. May play a role in cell cycle checkpoint control. Essential for telomere length control. In Homo sapiens (Human), this protein is RAD50-interacting protein 1 (RINT1).